A 1063-amino-acid chain; its full sequence is Unconventional myosin-Ic (1063 aa).

M1 is subject to N-acetylmethionine. Residues G47–E731 enclose the Myosin motor domain. Residues N88, Y96, S139–E148, and N192–S196 contribute to the ATP site. K383 is modified (N6-methyllysine). Position 408 is a phosphoserine (S408). The residue at position 486 (K486) is an N6-acetyllysine. At S536 the chain carries Phosphoserine. The tract at residues L608–D630 is actin-binding. 2 IQ domains span residues R734–V757 and K758–T786. A phosphoserine mark is found at S864 and S1041. The TH1 domain maps to K885–R1059.

Belongs to the TRAFAC class myosin-kinesin ATPase superfamily. Myosin family. In terms of assembly, interacts (via its IQ motifs) with CABP1 and CIB1; the interaction with CABP1 and CIB1 is calcium-dependent. Interacts (via tail domain) with PLEKHB1 (via PH domain); the interaction is not affected by the presence or absence of calcium and CALM. Interacts with POLR1A. Interacts with POLR2A. Component of the B-WICH complex, at least composed of SMARCA5/SNF2H, BAZ1B/WSTF, SF3B1, DEK, MYO1C, ERCC6, MYBBP1A and DDX21. Interacts (via its IQ motifs) with CALM; this precludes interaction with YWHAB. Interacts with YWHAB; this precludes interaction with CALM. Interacts with RPS6. Interacts with actin. Interacts with LLPH. Interacts with GLUT4. Interacts (via its IQ motifs) with SH3BGRL3; the interaction is dependent on calcium and takes place at membrane ruffles. Post-translationally, isoform 2 contains a N-acetylmethionine at position 1. As to expression, widely expressed.

Its subcellular location is the cytoplasm. It is found in the nucleus. The protein resides in the cell cortex. The protein localises to the cell projection. It localises to the ruffle membrane. Its subcellular location is the cytoplasmic vesicle. It is found in the stereocilium membrane. The protein resides in the nucleolus. The protein localises to the nucleoplasm. In terms of biological role, myosins are actin-based motor molecules with ATPase activity. Unconventional myosins serve in intracellular movements. Their highly divergent tails are presumed to bind to membranous compartments, which would be moved relative to actin filaments. Involved in glucose transporter recycling in response to insulin by regulating movement of intracellular GLUT4-containing vesicles to the plasma membrane. Component of the hair cell's (the sensory cells of the inner ear) adaptation-motor complex. Acts as a mediator of adaptation of mechanoelectrical transduction in stereocilia of vestibular hair cells. Binds phosphoinositides and links the actin cytoskeleton to cellular membranes. Isoform 3 is involved in regulation of transcription. Associated with transcriptional active ribosomal genes. Appears to cooperate with the WICH chromatin-remodeling complex to facilitate transcription. Necessary for the formation of the first phosphodiester bond during transcription initiation. The sequence is that of Unconventional myosin-Ic (MYO1C) from Bos taurus (Bovine).